The following is a 118-amino-acid chain: uncharacterized protein (118 aa).

This is an uncharacterized protein from Haemophilus influenzae (strain ATCC 51907 / DSM 11121 / KW20 / Rd).